Consider the following 669-residue polypeptide: DNA ligase (669 aa).

NAD(+) is bound by residues Asp33–Asp37, Ser82–Leu83, and Glu115. Lys117 (N6-AMP-lysine intermediate) is an active-site residue. NAD(+) is bound by residues Arg138, Glu172, Lys286, and Lys310. Zn(2+) is bound by residues Cys401, Cys404, Cys417, and Cys422. A BRCT domain is found at Val589–Asp669.

This sequence belongs to the NAD-dependent DNA ligase family. LigA subfamily. Mg(2+) is required as a cofactor. The cofactor is Mn(2+).

It catalyses the reaction NAD(+) + (deoxyribonucleotide)n-3'-hydroxyl + 5'-phospho-(deoxyribonucleotide)m = (deoxyribonucleotide)n+m + AMP + beta-nicotinamide D-nucleotide.. DNA ligase that catalyzes the formation of phosphodiester linkages between 5'-phosphoryl and 3'-hydroxyl groups in double-stranded DNA using NAD as a coenzyme and as the energy source for the reaction. It is essential for DNA replication and repair of damaged DNA. The sequence is that of DNA ligase from Borrelia duttonii (strain Ly).